Here is a 436-residue protein sequence, read N- to C-terminus: MADSRNASLFERARRSIPGGVNSPVRAFRAVGGTPRFIARADGAYLWDADGKRYIDYIGSWGPMILGHGHPAVLEAVQKAATEGFSFGAPTEREVELAEEILKLVPSAEQVRLVSSGTEAAMSALRLARGATGRSKIVKFEGCYHGHADALLVKAGSGLATFGHPTSAGVPTEVVQHTLVLTYNDVTGLEAAFSAHGAEIACVMIEPIAGNMNFVRAGLPFMKRLRELCTQHGALLVFDEVMTGFRVALGGAQSLYAKAIPGFKPDLSVFGKVIGGGMPLAAFAGPRAIMEQLAPLGPVYQAGTLSGNPVATACGLATLREIQKPGFFESLAAGTRDLLDGLLHAATAAGVPMVGDCEGGMFGFFFPKTAQAALPQNYVEVMATDGERFNRYFHGMLDRGVYLAPALYEAGFVSAAHTPADIEATLAAARATLAAA.

Position 272 is an N6-(pyridoxal phosphate)lysine (Lys-272).

It belongs to the class-III pyridoxal-phosphate-dependent aminotransferase family. HemL subfamily. Homodimer. Pyridoxal 5'-phosphate is required as a cofactor.

It localises to the cytoplasm. It catalyses the reaction (S)-4-amino-5-oxopentanoate = 5-aminolevulinate. The protein operates within porphyrin-containing compound metabolism; protoporphyrin-IX biosynthesis; 5-aminolevulinate from L-glutamyl-tRNA(Glu): step 2/2. It functions in the pathway porphyrin-containing compound metabolism; chlorophyll biosynthesis. This chain is Glutamate-1-semialdehyde 2,1-aminomutase, found in Methylibium petroleiphilum (strain ATCC BAA-1232 / LMG 22953 / PM1).